Reading from the N-terminus, the 920-residue chain is Isoleucine--tRNA ligase (920 aa).

Positions 58 to 68 match the 'HIGH' region motif; the sequence is PYANGHLHLGH. Glu-569 provides a ligand contact to L-isoleucyl-5'-AMP. A 'KMSKS' region motif is present at residues 610–614; it reads KMSKS. Position 613 (Lys-613) interacts with ATP. Zn(2+) is bound by residues Cys-895, Cys-898, Cys-910, and Cys-913.

The protein belongs to the class-I aminoacyl-tRNA synthetase family. IleS type 1 subfamily. Monomer. The cofactor is Zn(2+).

The protein localises to the cytoplasm. It carries out the reaction tRNA(Ile) + L-isoleucine + ATP = L-isoleucyl-tRNA(Ile) + AMP + diphosphate. Catalyzes the attachment of isoleucine to tRNA(Ile). As IleRS can inadvertently accommodate and process structurally similar amino acids such as valine, to avoid such errors it has two additional distinct tRNA(Ile)-dependent editing activities. One activity is designated as 'pretransfer' editing and involves the hydrolysis of activated Val-AMP. The other activity is designated 'posttransfer' editing and involves deacylation of mischarged Val-tRNA(Ile). This is Isoleucine--tRNA ligase from Helicobacter pylori (strain J99 / ATCC 700824) (Campylobacter pylori J99).